A 111-amino-acid chain; its full sequence is Nucleoid-associated protein PSEEN1789 (111 aa).

Disordered regions lie at residues 1–25 (MMKG…KMQE) and 89–111 (NSQD…KMPF).

It belongs to the YbaB/EbfC family. In terms of assembly, homodimer.

The protein resides in the cytoplasm. Its subcellular location is the nucleoid. Functionally, binds to DNA and alters its conformation. May be involved in regulation of gene expression, nucleoid organization and DNA protection. The chain is Nucleoid-associated protein PSEEN1789 from Pseudomonas entomophila (strain L48).